The chain runs to 366 residues: Chorismate synthase (366 aa).

NADP(+) contacts are provided by R48 and R54. Residues 125–127 (RSS), 238–239 (NA), G278, 293–297 (KPTSS), and R319 contribute to the FMN site.

Belongs to the chorismate synthase family. As to quaternary structure, homotetramer. It depends on FMNH2 as a cofactor.

The enzyme catalyses 5-O-(1-carboxyvinyl)-3-phosphoshikimate = chorismate + phosphate. It participates in metabolic intermediate biosynthesis; chorismate biosynthesis; chorismate from D-erythrose 4-phosphate and phosphoenolpyruvate: step 7/7. Functionally, catalyzes the anti-1,4-elimination of the C-3 phosphate and the C-6 proR hydrogen from 5-enolpyruvylshikimate-3-phosphate (EPSP) to yield chorismate, which is the branch point compound that serves as the starting substrate for the three terminal pathways of aromatic amino acid biosynthesis. This reaction introduces a second double bond into the aromatic ring system. The chain is Chorismate synthase from Paraburkholderia phytofirmans (strain DSM 17436 / LMG 22146 / PsJN) (Burkholderia phytofirmans).